The sequence spans 175 residues: UPF0398 protein SGO_0588 (175 aa).

The protein belongs to the UPF0398 family.

The protein is UPF0398 protein SGO_0588 of Streptococcus gordonii (strain Challis / ATCC 35105 / BCRC 15272 / CH1 / DL1 / V288).